A 294-amino-acid polypeptide reads, in one-letter code: MSSEGFVNLDKPAGWTSHDCVAKLRRLLRERRIGHGGTLDPAVTGVLPIAVGRATRLLPYLPSGKTYVGTIRFGLQTSTDDLTGDRLAEADTSHLSREAIEAALPQFLGHIQQQPPQVSAVQVQGQRLYQLARRGEAPTELPWRTVEIQSIRILQWRSGSQAELSVEIHCGAGTYIRSLARDLGAVLGVGGTLAELRRTASSGFDLNQSTPLTELLDGAAVPLLALDLPLQHLAKVQLSAETSDRWRQGQAMPVPDSVLPDAAPVRVYDLNGQFLGIGAIAAGLCKPKVVLAAL.

Asp-40 functions as the Nucleophile in the catalytic mechanism.

This sequence belongs to the pseudouridine synthase TruB family. Type 1 subfamily.

It catalyses the reaction uridine(55) in tRNA = pseudouridine(55) in tRNA. Its function is as follows. Responsible for synthesis of pseudouridine from uracil-55 in the psi GC loop of transfer RNAs. The polypeptide is tRNA pseudouridine synthase B (Synechococcus elongatus (strain ATCC 33912 / PCC 7942 / FACHB-805) (Anacystis nidulans R2)).